We begin with the raw amino-acid sequence, 118 residues long: Phosphoribosyl-AMP cyclohydrolase (118 aa).

D85 provides a ligand contact to Mg(2+). C86 lines the Zn(2+) pocket. D87 and D89 together coordinate Mg(2+). The Zn(2+) site is built by C102 and C109.

This sequence belongs to the PRA-CH family. In terms of assembly, homodimer. It depends on Mg(2+) as a cofactor. Requires Zn(2+) as cofactor.

The protein localises to the cytoplasm. It catalyses the reaction 1-(5-phospho-beta-D-ribosyl)-5'-AMP + H2O = 1-(5-phospho-beta-D-ribosyl)-5-[(5-phospho-beta-D-ribosylamino)methylideneamino]imidazole-4-carboxamide. It participates in amino-acid biosynthesis; L-histidine biosynthesis; L-histidine from 5-phospho-alpha-D-ribose 1-diphosphate: step 3/9. Catalyzes the hydrolysis of the adenine ring of phosphoribosyl-AMP. The chain is Phosphoribosyl-AMP cyclohydrolase from Sulfurisphaera tokodaii (strain DSM 16993 / JCM 10545 / NBRC 100140 / 7) (Sulfolobus tokodaii).